The following is a 117-amino-acid chain: UPF0251 protein DehaBAV1_0135 (117 aa).

The protein belongs to the UPF0251 family.

This is UPF0251 protein DehaBAV1_0135 from Dehalococcoides mccartyi (strain ATCC BAA-2100 / JCM 16839 / KCTC 5957 / BAV1).